A 361-amino-acid chain; its full sequence is dTDP-glucose 4,6-dehydratase (361 aa).

Residues 11 to 12, 32 to 35, 58 to 59, 80 to 84, and threonine 99 each bind NAD(+); these read FI, DKLT, DI, and LAAES. Serine 84 is a substrate binding site. Residue threonine 133 participates in substrate binding. Aspartate 134 (proton donor) is an active-site residue. Residues glutamate 135 and tyrosine 167 each act as proton acceptor in the active site. NAD(+) is bound at residue 167-171; sequence YSASK. Residue asparagine 196 participates in substrate binding. Asparagine 197 provides a ligand contact to NAD(+). Substrate-binding positions include 206–207, 222–224, arginine 231, asparagine 266, and 296–300; these read KL, PIY, and DRPGH.

The protein belongs to the NAD(P)-dependent epimerase/dehydratase family. dTDP-glucose dehydratase subfamily. As to quaternary structure, homodimer. NAD(+) is required as a cofactor.

The enzyme catalyses dTDP-alpha-D-glucose = dTDP-4-dehydro-6-deoxy-alpha-D-glucose + H2O. It participates in carbohydrate biosynthesis; dTDP-L-rhamnose biosynthesis. It functions in the pathway bacterial outer membrane biogenesis; LPS O-antigen biosynthesis. In terms of biological role, catalyzes the dehydration of dTDP-D-glucose to form dTDP-6-deoxy-D-xylo-4-hexulose via a three-step process involving oxidation, dehydration and reduction. The polypeptide is dTDP-glucose 4,6-dehydratase (rfbB) (Shigella flexneri).